We begin with the raw amino-acid sequence, 289 residues long: Arabinogalactan O-methyltransferase 1 (289 aa).

Residues 12 to 32 (IITGVLLAGLVGGALLFTSFI) form a helical membrane-spanning segment.

The protein belongs to the methyltransferase superfamily. As to quaternary structure, binds to the translation initiation factors TIF3E1.

It is found in the golgi apparatus membrane. Involved in the methylation of glucuronic acid of different plant cell wall component, but mainly on side chains of arabinogalactans. This chain is Arabinogalactan O-methyltransferase 1 (AGM1), found in Arabidopsis thaliana (Mouse-ear cress).